Reading from the N-terminus, the 415-residue chain is MRRSGPELWKTLTSVSKSGQKKGRRNTRQPVRPLSRFYRIGSSPMKVEFAGLNAPMRLNDESLMTIAEQTEDEIRDLMGGTKKILEERDTGKKKRNREKLHPMERGFSGTQLVGQKLGAPPPVDGVNFDDFETYCLEVKRTSNMTNVFGRVHTMSALVVTGNGRGLAGYAVGKAPIHRTTTAIINGIGMASRKIFHVELHEGRTIYQDFYAECRNTRVFAQRRPRGFGLTCHPRLIKICEAIGIKDIYVKVEGSTKNYLALTHAFVTGLLNQETHQQLAERKGLHVVEMSPSRHFLPQIVASPISTELKTEETLEALDRLNLDDFYGEGRYPLRKPKALPFFSNLEGHLDARWRKHPFRNQESTMIRLIADNMVPRWTRDARAAWAEQRNERMTTGVEPMPLGIGLSHVVPKKDD.

Positions Met-1 to Val-31 are disordered. In terms of domain architecture, S5 DRBM spans Phe-131–Val-197. The disordered stretch occupies residues Gly-396–Asp-415.

The protein belongs to the universal ribosomal protein uS5 family. In terms of assembly, component of the mitochondrial ribosome small subunit (28S) which comprises a 12S rRNA and about 30 distinct proteins.

Its subcellular location is the mitochondrion. This chain is Small ribosomal subunit protein uS5m (mrps-5), found in Caenorhabditis briggsae.